The sequence spans 282 residues: uncharacterized protein (282 aa).

Belongs to the ycf80 family.

It is found in the plastid. The protein localises to the chloroplast. This is an uncharacterized protein from Guillardia theta (Cryptophyte).